We begin with the raw amino-acid sequence, 174 residues long: Regenerating islet-derived protein 3-gamma (174 aa).

The first 26 residues, 1–26 (MLPRITITIMSWMLLSCLMLLSQVQG), serve as a signal peptide directing secretion. A propeptide spanning residues 27–37 (EVAKKDAPSSR) is cleaved from the precursor. 3 disulfides stabilise this stretch: Cys-40/Cys-51, Cys-68/Cys-170, and Cys-145/Cys-162. Positions 47 to 171 (YGSYCYALFS…CNLELPYVCK (125 aa)) constitute a C-type lectin domain. Positions 103–118 (WIGLHDPTLGYEPNRG) are sufficient to activate EXTL3. Residue His-107 participates in Zn(2+) binding. Positions 114-116 (EPN) match the EPN motif. The Zn(2+) site is built by Glu-121 and His-144.

As to quaternary structure, forms a hexameric membrane-permeabilizing oligomeric pore on membrane phospholipids. The hexamer is formed by three dimers related by helical symmetry. Forms filaments, filamentation traps pore complexes and limits damage to host cells. Interacts with EXTL3. Post-translationally, proteolytic processing by trypsin removes an inhibitory N-terminal propeptide and is essential for peptidoglycan binding and antibacterial activity. As to expression, predominantly expressed in the small intestine, including Paneth cells (at protein level). Hardly detectable in the colon (at protein level). Highly expressed in the lung epithelium during methicillin-resistant S.aureus infection and allergic airway inflammation (at protein level). Skin injury increases its epidermal expression. Also expressed in the pancreas. Expressed by nocireceptors.

It localises to the secreted. The protein resides in the cytoplasm. Lipopolysaccharide inhibits pore-forming activity, explaining why is bactericidal for Gram-positive but not Gram-negative bacteria. Bactericidal C-type lectin which acts exclusively against Gram-positive bacteria and mediates bacterial killing by binding to surface-exposed carbohydrate moieties of peptidoglycan. Restricts bacterial colonization of the intestinal epithelial surface and consequently limits activation of adaptive immune responses by the microbiota. Its function is as follows. Acts as a hormone in response to different stimuli like anti-inflammatory signals, such as IL17A, or gut microbiome. Is secreted by different cell types to activate its receptor EXTL3 and induce cell specific signaling pathways. Induced by IL17A in keratinocytes, regulates keratinocyte proliferation and differentiation after skin injury. In parallel, inhibits skin inflammation through the inhibition of inflammatory cytokines such as IL6 and TNF. Induced by IL22 in lung epithelial cells, inhibits cytokine production and regulates allergic airway inflammation. Induced in small intestine by inulin-enriched diet and Lactobacillus gasseri enriched microbiome, plays a role in the improvement of gut barrier function, the regulation of energy balance and glucose levels. Modulates microbiota composition in duodenal contents. Produced by nociceptor in response to endotoxins, prevents endotoxic death by targeting kynurenine pathway in microglia. In terms of biological role, has bacteriostatic activity. Functionally, has bactericidal activity against L.monocytogenes and methicillin-resistant S.aureus. This is Regenerating islet-derived protein 3-gamma from Mus musculus (Mouse).